Here is a 389-residue protein sequence, read N- to C-terminus: 8-amino-7-oxononanoate synthase (389 aa).

Residue arginine 23 participates in substrate binding. 114–115 contributes to the pyridoxal 5'-phosphate binding site; that stretch reads GY. Histidine 139 lines the substrate pocket. Positions 185, 213, and 242 each coordinate pyridoxal 5'-phosphate. The residue at position 245 (lysine 245) is an N6-(pyridoxal phosphate)lysine. Threonine 357 is a substrate binding site.

This sequence belongs to the class-II pyridoxal-phosphate-dependent aminotransferase family. BioF subfamily. As to quaternary structure, homodimer. Pyridoxal 5'-phosphate serves as cofactor.

It catalyses the reaction 6-carboxyhexanoyl-[ACP] + L-alanine + H(+) = (8S)-8-amino-7-oxononanoate + holo-[ACP] + CO2. The protein operates within cofactor biosynthesis; biotin biosynthesis. In terms of biological role, catalyzes the decarboxylative condensation of pimeloyl-[acyl-carrier protein] and L-alanine to produce 8-amino-7-oxononanoate (AON), [acyl-carrier protein], and carbon dioxide. The chain is 8-amino-7-oxononanoate synthase from Acidithiobacillus ferrooxidans (strain ATCC 23270 / DSM 14882 / CIP 104768 / NCIMB 8455) (Ferrobacillus ferrooxidans (strain ATCC 23270)).